A 579-amino-acid chain; its full sequence is YTH domain-containing family protein 2 (579 aa).

Residues 1–45 (MSASSLLEQRPKGQGNKVQNGSVHQKDGLNDDDFEPYLSPQARPN) form a disordered region. Position 2 is an N-acetylserine (Ser-2). Residues Ser-2, Ser-4, Ser-5, Ser-22, Ser-39, and Ser-196 each carry the phosphoserine modification. A localization to mRNA processing bodies (P-bodies) region spans residues 2 to 384 (SASSLLEQRP…QAGSGSTPSE (383 aa)). Positions 247 to 387 (AKQQPKLKTK…SGSTPSEPHP (141 aa)) are disordered. The segment covering 291 to 316 (ALVQNIGQPTQGSPQHVGQQANNSPP) has biased composition (polar residues). Over residues 337-349 (AQLSVQQQAAQPT) the composition is skewed to low complexity. Ser-359 carries the phosphoserine modification. The span at 359–371 (SGFGHNGVDGNGV) shows a compositional bias: gly residues. The span at 372–383 (GQSQAGSGSTPS) shows a compositional bias: polar residues. An interaction with m6A-containing mRNAs region spans residues 385–579 (PHPVLEKLRS…VKKERQGRGK (195 aa)). Ser-394 bears the Phosphoserine mark. Positions 410–544 (GRVFIIKSYS…EKAKQVLKII (135 aa)) constitute a YTH domain. RNA is bound by residues 416-418 (KSY), Asp-422, 432-433 (WC), Asn-462, Trp-486, and Trp-491.

Belongs to the YTHDF family. YTHDF2 subfamily. In terms of assembly, interacts with CNOT1; interaction is direct and promotes recruitment of the CCR4-NOT complex. Interacts with YTHDF3. Interacts with RIDA/HRSP12; interaction leads to recruitment of the ribonuclease P/MRP complex. Post-translationally, ubiquitinated by the SCF(SKP2) complex, leading to its degradation.

The protein resides in the cytoplasm. It is found in the cytosol. It localises to the P-body. Its subcellular location is the stress granule. The protein localises to the nucleus. Specifically recognizes and binds N6-methyladenosine (m6A)-containing RNAs, and regulates their stability. M6A is a modification present at internal sites of mRNAs and some non-coding RNAs and plays a role in mRNA stability and processing. Acts as a regulator of mRNA stability by promoting degradation of m6A-containing mRNAs via interaction with the CCR4-NOT and ribonuclease P/MRP complexes, depending on the context. The YTHDF paralogs (YTHDF1, YTHDF2 and YTHDF3) share m6A-containing mRNAs targets and act redundantly to mediate mRNA degradation and cellular differentiation. M6A-containing mRNAs containing a binding site for RIDA/HRSP12 (5'-GGUUC-3') are preferentially degraded by endoribonucleolytic cleavage: cooperative binding of RIDA/HRSP12 and YTHDF2 to transcripts leads to recruitment of the ribonuclease P/MRP complex. Other m6A-containing mRNAs undergo deadenylation via direct interaction between YTHDF2 and CNOT1, leading to recruitment of the CCR4-NOT and subsequent deadenylation of m6A-containing mRNAs. Required maternally to regulate oocyte maturation: probably acts by binding to m6A-containing mRNAs, thereby regulating maternal transcript dosage during oocyte maturation, which is essential for the competence of oocytes to sustain early zygotic development. Also required during spermatogenesis: regulates spermagonial adhesion by promoting degradation of m6A-containing transcripts coding for matrix metallopeptidases. Also involved in hematopoietic stem cells specification by binding to m6A-containing mRNAs, leading to promote their degradation. Also acts as a regulator of neural development by promoting m6A-dependent degradation of neural development-related mRNA targets. Inhibits neural specification of induced pluripotent stem cells by binding to methylated neural-specific mRNAs and promoting their degradation, thereby restraining neural differentiation. Regulates circadian regulation of hepatic lipid metabolism: acts by promoting m6A-dependent degradation of PPARA transcripts. Regulates the innate immune response to infection by inhibiting the type I interferon response: acts by binding to m6A-containing IFNB transcripts and promoting their degradation. May also act as a promoter of cap-independent mRNA translation following heat shock stress: upon stress, relocalizes to the nucleus and specifically binds mRNAs with some m6A methylation mark at their 5'-UTR, protecting demethylation of mRNAs by FTO, thereby promoting cap-independent mRNA translation. Regulates mitotic entry by promoting the phase-specific m6A-dependent degradation of WEE1 transcripts. Promotes formation of phase-separated membraneless compartments, such as P-bodies or stress granules, by undergoing liquid-liquid phase separation upon binding to mRNAs containing multiple m6A-modified residues: polymethylated mRNAs act as a multivalent scaffold for the binding of YTHDF proteins, juxtaposing their disordered regions and thereby leading to phase separation. The resulting mRNA-YTHDF complexes then partition into different endogenous phase-separated membraneless compartments, such as P-bodies, stress granules or neuronal RNA granules. May also recognize and bind RNAs modified by C5-methylcytosine (m5C) and act as a regulator of rRNA processing. This chain is YTH domain-containing family protein 2, found in Macaca fascicularis (Crab-eating macaque).